The sequence spans 458 residues: IPDDVGYRNQKTASKEGVCVVSKCQDGPNTLPRAKRANSFLEELRPSSLERECVEEVCDLEEAKEIFQSVDDTLAFWYKYVDGDQCAALPSEHPCSSQCCGHGTCADSIGGFSCQCHGGWEGSFCQYEVRFSNCSVDNGGCAHYCLEEEAGRSCSCAPGYELADDHLQCEPAVRFPCGRLGWKRIEKKRGNVKRDLEQVDEMDEVDPRLIDGKLTRRGDSPWQVILLDSKKKLACGAVLIHVSWVLTAAHCMEEPKKLFVRLGEYDLRRKERWELDLNIQEVLIHPNYSRSTTDNDIALLRLAQPATLSQTIVPICLPDNGLAERELMQAGQETVVTGWGYHSSREKEAKRNRTFILNFITVPVAPQNECEQVMSNIISENMLCAGILGDRRDACDGDSGGPMVASFRGTWFLVGLVSWGEGCGDLNNYGVYTKVSRYLDWIHSHIEEKEAAPESPAP.

The first 27 residues, Ile1–Gly27, serve as a signal peptide directing secretion. The propeptide occupies Pro28 to Arg36. Positions Ala37 to Asp82 constitute a Gla domain. A 4-carboxyglutamate mark is found at Glu42, Glu43, Glu50, Glu52, Glu55, Glu56, Glu61, Glu62, and Glu65. The cysteines at positions 53 and 58 are disulfide-linked. 4 cysteine pairs are disulfide-bonded: Cys86/Cys105, Cys95/Cys100, Cys99/Cys114, and Cys116/Cys125. EGF-like domains lie at Ser91 to Gln126 and Arg130 to Glu170. Residue Asp107 is modified to (3R)-3-hydroxyaspartate. N-linked (GlcNAc...) asparagine glycosylation is present at Asn133. 5 disulfides stabilise this stretch: Cys134–Cys145, Cys141–Cys154, Cys156–Cys169, Cys177–Cys316, and Cys235–Cys251. In terms of domain architecture, Peptidase S1 spans Ile210 to Glu447. The active-site Charge relay system is the His250. Asn287 is a glycosylation site (N-linked (GlcNAc...) asparagine). Asp296 functions as the Charge relay system in the catalytic mechanism. An N-linked (GlcNAc...) asparagine glycan is attached at Asn352. Intrachain disulfides connect Cys370–Cys384 and Cys395–Cys423. The Charge relay system role is filled by Ser399.

It belongs to the peptidase S1 family. As to quaternary structure, synthesized as a single chain precursor, which is cleaved into a light chain and a heavy chain held together by a disulfide bond. The enzyme is then activated by thrombin, which cleaves a tetradecapeptide from the amino end of the heavy chain; this reaction, which occurs at the surface of endothelial cells, is strongly promoted by thrombomodulin. Post-translationally, the vitamin K-dependent, enzymatic carboxylation of some Glu residues allows the modified protein to bind calcium. The iron and 2-oxoglutarate dependent 3-hydroxylation of aspartate and asparagine is (R) stereospecific within EGF domains. As to expression, plasma; synthesized in the liver.

The protein localises to the secreted. The protein resides in the golgi apparatus. Its subcellular location is the endoplasmic reticulum. The enzyme catalyses Degradation of blood coagulation factors Va and VIIIa.. Protein C is a vitamin K-dependent serine protease that regulates blood coagulation by inactivating factors Va and VIIIa in the presence of calcium ions and phospholipids. Exerts a protective effect on the endothelial cell barrier function. The polypeptide is Vitamin K-dependent protein C (PROC) (Oryctolagus cuniculus (Rabbit)).